The chain runs to 138 residues: Basic phospholipase A2 Tbo-G6D49 (138 aa).

Positions 1-16 (MRTLWIMAVLLVGVEG) are cleaved as a signal peptide. Disulfide bonds link cysteine 42–cysteine 131, cysteine 44–cysteine 60, cysteine 59–cysteine 111, cysteine 65–cysteine 138, cysteine 66–cysteine 104, cysteine 73–cysteine 97, and cysteine 91–cysteine 102. Ca(2+) contacts are provided by tyrosine 43, glycine 45, and glycine 47. The active site involves histidine 63. Residue aspartate 64 coordinates Ca(2+). Residue aspartate 105 is part of the active site.

Monomer. It depends on Ca(2+) as a cofactor. Expressed by the venom gland.

It localises to the secreted. It catalyses the reaction a 1,2-diacyl-sn-glycero-3-phosphocholine + H2O = a 1-acyl-sn-glycero-3-phosphocholine + a fatty acid + H(+). Its function is as follows. Snake venom phospholipase A2 (PLA2) that impairs hemostasis. It weakly inhibits ADP-induced platelet aggregation when tested on platelet rich plasma from human and rabbit blood (15-25% of inhibition at 5-10 ug of enzyme), and dose-dependently inhibits blood coagulation, possibly by inhibiting thrombin activation. Exhibits strong hydrolytic activities toward L-dipalmitoyl phosphatidylcholine. PLA2 catalyzes the calcium-dependent hydrolysis of the 2-acyl groups in 3-sn-phosphoglycerides. This chain is Basic phospholipase A2 Tbo-G6D49, found in Craspedocephalus borneensis (Borneo pit viper).